Consider the following 336-residue polypeptide: MLRLGYKASAEQFAPRDLLAYTVLAEQAGFDSVFVSDHLQPWRHTGGHAPAALPWLGAAAASTERVLLGTSVLTPTLRYHPGVVAQAFATLGCLAPGRVTLGVGSGESMNEAPLGLPWPDGKERYARFREAIALIQALWAGERVTIDGTYYSARDATIYDRPDVPVPLYVAASGPSATRLAGRVGDGFICTSGKGRELYTETLLPALAEGAAKSDRTLADLDLMIEMKVSYDPDHARALEATRNWGALALTSEEKVGVEDPVEMERLADALPTERTASRWIVSDDPDEHVERIWSYVEMGFTHLVFHDPRADQAAFLERYAEEILPRLRARERQVS.

Coenzyme F420-(gamma-Glu)n is bound at residue Asp-37. His-38 serves as the catalytic Proton donor. Residues Thr-74 and 105–106 contribute to the coenzyme F420-(gamma-Glu)n site; that span reads SG. Residue Glu-107 is the Proton acceptor of the active site. Residues Asn-110, 173–174, and 176–177 each bind coenzyme F420-(gamma-Glu)n; these read SG and SA. 4 residues coordinate substrate: Thr-191, Lys-194, Lys-255, and Arg-279.

This sequence belongs to the F420-dependent glucose-6-phosphate dehydrogenase family. As to quaternary structure, homodimer.

It carries out the reaction oxidized coenzyme F420-(gamma-L-Glu)(n) + D-glucose 6-phosphate + H(+) = 6-phospho-D-glucono-1,5-lactone + reduced coenzyme F420-(gamma-L-Glu)(n). Catalyzes the coenzyme F420-dependent oxidation of glucose 6-phosphate (G6P) to 6-phosphogluconolactone. This Beutenbergia cavernae (strain ATCC BAA-8 / DSM 12333 / CCUG 43141 / JCM 11478 / NBRC 16432 / NCIMB 13614 / HKI 0122) protein is F420-dependent glucose-6-phosphate dehydrogenase.